A 293-amino-acid polypeptide reads, in one-letter code: MTDSRYIGRFAPSPSGELHFGSLIAALGSYLQARANQGIWRVRIEDIDPPREVPGAADTILRQLDHYGLHWDGDVLWQSQRHEAYREALAWLGEQGLSYYCTCTRARIHAVGGIYDGHCRDLGLGAENAALRLRQTRPVLQFTDRLHGTLIANEPLAREDFIIHRRDGLFAYNLAVVVDDHFQGITEIVRGADLIEPTVRQISLYQHFGWQAPDYLHLPLALNADGNKLSKQNHAPALPEGDPRPEIVRALRFLNQDIAQDWQALSMDDLLSQAVANWQPAKIEHSQMAPAEL.

L-glutamate is bound by residues 9–13 and E45; that span reads RFAPS. The short motif at 12–22 is the 'HIGH' region element; it reads PSPSGELHFGS. Zn(2+) contacts are provided by C101, C103, Y115, and C119. Residues Y172 and R190 each coordinate L-glutamate. Residues 228-232 carry the 'KMSKS' region motif; it reads KLSKQ. K231 is an ATP binding site.

Belongs to the class-I aminoacyl-tRNA synthetase family. GluQ subfamily. Zn(2+) serves as cofactor.

Its function is as follows. Catalyzes the tRNA-independent activation of glutamate in presence of ATP and the subsequent transfer of glutamate onto a tRNA(Asp). Glutamate is transferred on the 2-amino-5-(4,5-dihydroxy-2-cyclopenten-1-yl) moiety of the queuosine in the wobble position of the QUC anticodon. The sequence is that of Glutamyl-Q tRNA(Asp) synthetase from Klebsiella pneumoniae (strain 342).